Consider the following 168-residue polypeptide: MAEENQVATEEQQTPFEMQIQRIYIKDVSFEAPNLPNIFHQEWKPQLGFDLDTETREIGEDTYEVVLHINVQTTLEDSNDVAFICEVKQAGVFTIKGIEGIQLAHCLAAKCPEVLYPYARELISSLVNRGTFPALNLSPVNFDALFMDYLARQQAEENGESTTNTTLN.

The protein belongs to the SecB family. As to quaternary structure, homotetramer, a dimer of dimers. One homotetramer interacts with 1 SecA dimer.

The protein localises to the cytoplasm. Its function is as follows. One of the proteins required for the normal export of preproteins out of the cell cytoplasm. It is a molecular chaperone that binds to a subset of precursor proteins, maintaining them in a translocation-competent state. It also specifically binds to its receptor SecA. The polypeptide is Protein-export protein SecB (Glaesserella parasuis serovar 5 (strain SH0165) (Haemophilus parasuis)).